We begin with the raw amino-acid sequence, 694 residues long: Nuclear factor erythroid 2-related factor 3 (694 aa).

A compositionally biased stretch (low complexity) spans 133-150 (ASSTGGAGASVDGGSQAV). Disordered stretches follow at residues 133-256 (ASST…LNGT) and 330-357 (DPTARTSQSQEPFLQLNSHTTNPEQTLP). 2 stretches are compositionally biased toward basic and acidic residues: residues 193–217 (GVLREKHEAVDHSSQHEENEERVSA) and 231–254 (NKIAEKPDWEAEKTTESRNERHLN). The span at 333–357 (ARTSQSQEPFLQLNSHTTNPEQTLP) shows a compositional bias: polar residues. The 64-residue stretch at 578–641 (LIRDIRRRGK…NIMKQKLHDL (64 aa)) folds into the bZIP domain. The segment at 580–599 (RDIRRRGKNKVAAQNCRKRK) is basic motif. The segment at 606–620 (LEDDVCNLQAKKETL) is leucine-zipper.

This sequence belongs to the bZIP family. CNC subfamily. Heterodimer with MAFG, MAFK and other small MAF proteins that binds to the MAF recognition elements (MARE). As to expression, highly expressed in human placenta and also in B-cell and monocyte cell lines. Low expression in heart, brain, lung, skeletal muscle, kidney and pancreas.

It localises to the nucleus. Activates erythroid-specific, globin gene expression. The protein is Nuclear factor erythroid 2-related factor 3 (NFE2L3) of Homo sapiens (Human).